The following is a 277-amino-acid chain: Cell division protein ZipA (277 aa).

The Periplasmic segment spans residues 1–5 (MQDLR). A helical transmembrane segment spans residues 6-26 (LMLLLFGVITIIVLFLHGVWA). Over 27–277 (RRKERSALFY…NALIRSTPHL (251 aa)) the chain is Cytoplasmic. Positions 120-139 (QKKSDDLSHQSKETHHPSIQ) are disordered.

This sequence belongs to the ZipA family. Interacts with FtsZ via their C-terminal domains.

The protein resides in the cell inner membrane. Its function is as follows. Essential cell division protein that stabilizes the FtsZ protofilaments by cross-linking them and that serves as a cytoplasmic membrane anchor for the Z ring. Also required for the recruitment to the septal ring of downstream cell division proteins. The protein is Cell division protein ZipA of Hamiltonella defensa subsp. Acyrthosiphon pisum (strain 5AT).